We begin with the raw amino-acid sequence, 88 residues long: Large ribosomal subunit protein eL31 (88 aa).

It belongs to the eukaryotic ribosomal protein eL31 family.

The chain is Large ribosomal subunit protein eL31 from Methanoregula boonei (strain DSM 21154 / JCM 14090 / 6A8).